Here is an 87-residue protein sequence, read N- to C-terminus: Potassium channel toxin TsTXK-beta/Cryptide TyPep-16 (87 aa).

An N-terminal signal peptide occupies residues 1 to 19 (MERKLALLLILGMVTLASC). Residues 53–87 (QFGCPAYEGYCNDHCNDIERKDGECHGFKCKCAKD) enclose the BetaSPN-type CS-alpha/beta domain. Disulfide bonds link Cys56-Cys77, Cys63-Cys82, and Cys67-Cys84.

The protein belongs to the long chain scorpion toxin family. Class 1 subfamily. In terms of tissue distribution, expressed by the venom gland.

The protein localises to the secreted. In terms of biological role, specifically blocks voltage-gated potassium channels Kv4.2/KCND2. When measured at the peak current, the blocking effect of this toxin is about 65% and shows an IC(50)=652 nM. However, when measured at a later moment of the depolarising test pulse (500 ms), a 100% block of the current is observed with an IC(50)=313 nM. This may indicate a preference of the toxin for binding the inactivated state of the channel. The inhibition is completely reversible. In vivo, intraplantar injection into rat paw induces overt nociception (licking and lifting behaviors) and decreases the mechanical nociceptive threshold (hyperalgesia). Furthermore, the hyperalgesia is prolonged when intrathecal injections are performed. Its function is as follows. Induces discomfort and anxiety in mice, as it moderately diminishes locomotion (but has no effect on rearing behavior). Does not cause hemolysis, mast cell degranulation, LDH release, and does not have antimicrobial activity. Does not cause edema and pain. Functionally, does not induce hemolytic activity, lactate dehydrogenase (LDH) release from mast cells, mast cell degranulation, and antimicrobial effects. In vivo, injection into mice causes moderate edema formation, but induces very weak or no change in nociceptive sensibility. It also reduces mice locomotion, suggesting an increase in anxiety, but causes no alteration in rearing (standing on hind limbs). The polypeptide is Potassium channel toxin TsTXK-beta/Cryptide TyPep-16 (Tityus serrulatus (Brazilian scorpion)).